Here is an 84-residue protein sequence, read N- to C-terminus: Small ribosomal subunit protein eS27 (84 aa).

Over residues 1–16 (MPLAKDPLHPSPEEEK) the composition is skewed to basic and acidic residues. The disordered stretch occupies residues 1–25 (MPLAKDPLHPSPEEEKRKHKKKRLV). Position 11 is a phosphoserine (Ser-11). The segment at 38–60 (PGCYKITTVFSHAQTVVLCVGCS) adopts a C4-type zinc-finger fold.

The protein belongs to the eukaryotic ribosomal protein eS27 family. In terms of assembly, component of the small ribosomal subunit. Part of the small subunit (SSU) processome, composed of more than 70 proteins and the RNA chaperone small nucleolar RNA (snoRNA) U3. Zn(2+) is required as a cofactor.

The protein localises to the cytoplasm. It localises to the nucleus. It is found in the nucleolus. Its function is as follows. Component of the small ribosomal subunit. The ribosome is a large ribonucleoprotein complex responsible for the synthesis of proteins in the cell. Required for proper rRNA processing and maturation of 18S rRNAs. Part of the small subunit (SSU) processome, first precursor of the small eukaryotic ribosomal subunit. During the assembly of the SSU processome in the nucleolus, many ribosome biogenesis factors, an RNA chaperone and ribosomal proteins associate with the nascent pre-rRNA and work in concert to generate RNA folding, modifications, rearrangements and cleavage as well as targeted degradation of pre-ribosomal RNA by the RNA exosome. This chain is Small ribosomal subunit protein eS27 (RPS27), found in Pongo abelii (Sumatran orangutan).